The chain runs to 160 residues: Peripheral myelin protein 22 (160 aa).

Met-1 is a topological domain (cytoplasmic). The chain crosses the membrane as a helical span at residues 2 to 31 (LLLLLSIIVLHVAVLVLLFVSTIVSQWIVG). The Extracellular portion of the chain corresponds to 32-64 (NGHATDLWQNCSTSSSGNVHHCFSSSPNEWLQS). N-linked (GlcNAc...) asparagine glycosylation is present at Asn-41. The chain crosses the membrane as a helical span at residues 65-91 (VQATMILSIIFSILSLFLFFCQLFTLT). At 92–95 (KGGR) the chain is on the cytoplasmic side. A helical transmembrane segment spans residues 96–119 (FYITGIFQILAGLCVMSAAAIYTV). The Extracellular segment spans residues 120–133 (RHPEWHLNSDYSYG). Residues 134–156 (FAYILAWVAFPLALLSGVIYVIL) traverse the membrane as a helical segment. At 157 to 160 (RKRE) the chain is on the cytoplasmic side.

It belongs to the PMP-22/EMP/MP20 family. Post-translationally, ubiquitinated by the DCX(DCAF13) E3 ubiquitin ligase complex, leading to its degradation.

The protein resides in the cell membrane. Its function is as follows. Might be involved in growth regulation, and in myelinization in the peripheral nervous system. In Homo sapiens (Human), this protein is Peripheral myelin protein 22 (PMP22).